A 186-amino-acid polypeptide reads, in one-letter code: Elongation factor P (186 aa).

Belongs to the elongation factor P family.

The protein localises to the cytoplasm. Its pathway is protein biosynthesis; polypeptide chain elongation. Involved in peptide bond synthesis. Stimulates efficient translation and peptide-bond synthesis on native or reconstituted 70S ribosomes in vitro. Probably functions indirectly by altering the affinity of the ribosome for aminoacyl-tRNA, thus increasing their reactivity as acceptors for peptidyl transferase. This chain is Elongation factor P, found in Shewanella frigidimarina (strain NCIMB 400).